Here is a 555-residue protein sequence, read N- to C-terminus: E3 ubiquitin-protein ligase ARIH1 (555 aa).

The span at 1–47 (MDSDEGYNYEFDEDEECSEEDSGAEEEEDEDDDEPDDDNLDLGEVEL) shows a compositional bias: acidic residues. The disordered stretch occupies residues 1–93 (MDSDEGYNYE…GGGGGPGHEQ (93 aa)). Over residues 65 to 90 (ETGGGGGSALGPGGGGGGGGGGGGPG) the composition is skewed to gly residues. The UBA-like stretch occupies residues 103 to 151 (TAEQILQHMVECIREVNEVIQNPATITRILLSHFNWDKEKLMERYFDGN). Lys140 bears the N6-acetyllysine mark. A TRIAD supradomain region spans residues 180–391 (QDMPCQICYL…SAWYNCNRYN (212 aa)). Positions 184, 187, 201, 203, 206, 209, 229, 234, 274, 279, 295, 297, 302, 305, 310, 315, 342, and 345 each coordinate Zn(2+). Residues 184–234 (CQICYLNYPNSYFTGLECGHKFCMQCWSEYLTTKIMEEGMGQTISCPAHGC) form an RING-type 1 zinc finger. Residues 254–315 (LKYQHLITNS…GENWHDPVKC (62 aa)) form an IBR-type zinc finger. The RING-type 2; atypical zinc finger occupies 342 to 373 (CPKCHVTIEKDGGCNHMVCRNQNCKAEFCWVC). Cys355 is an active-site residue. Zn(2+)-binding residues include Cys360, Cys365, Cys370, Cys373, His380, and Cys387. The interval 406–555 (RAALQRYLFY…EKDLWEYIED (150 aa)) is ariadne domain.

It belongs to the RBR family. Ariadne subfamily. As to quaternary structure, interacts (via the first RING-type zinc finger) with UBE2L3. Associates with cullin-RING ubiquitin ligase (CRL) complexes containing CUL1, CUL2 and CUL3. Interacts with neddylated CUL1. Interacts with neddylated CUL2. Interacts with neddylated CUL3. Interacts with neddylated CUL4A.

The protein localises to the cytoplasm. The protein resides in the nucleus. It localises to the cajal body. The catalysed reaction is [E2 ubiquitin-conjugating enzyme]-S-ubiquitinyl-L-cysteine + [acceptor protein]-L-lysine = [E2 ubiquitin-conjugating enzyme]-L-cysteine + [acceptor protein]-N(6)-ubiquitinyl-L-lysine.. It participates in protein modification; protein ubiquitination. Autoinhibited by the ariadne domain, which masks the second RING-type zinc finger that contains the active site and inhibits the E3 activity. Inhibition is relieved upon binding to neddylated cullin-RING ubiquitin ligase complexes, which activate the E3 ligase activity of ARIH1. E3 ubiquitin-protein ligase, which catalyzes ubiquitination of target proteins together with ubiquitin-conjugating enzyme E2 UBE2L3. Acts as an atypical E3 ubiquitin-protein ligase by working together with cullin-RING ubiquitin ligase (CRL) complexes and initiating ubiquitination of CRL substrates: associates with CRL complexes and specifically mediates addition of the first ubiquitin on CRLs targets. The initial ubiquitin is then elongated by CDC34/UBE2R1 and UBE2R2. E3 ubiquitin-protein ligase activity is activated upon binding to neddylated cullin-RING ubiquitin ligase complexes. Plays a role in protein translation in response to DNA damage by mediating ubiquitination of EIF4E2, the consequences of EIF4E2 ubiquitination are however unclear. According to a report, EIF4E2 ubiquitination leads to promote EIF4E2 cap-binding and protein translation arrest. According to another report EIF4E2 ubiquitination leads to its subsequent degradation. Acts as the ligase involved in ISGylation of EIF4E2. In vitro, controls the degradation of the LINC (LInker of Nucleoskeleton and Cytoskeleton) complex member SUN2 and may therefore have a role in the formation and localization of the LINC complex, and as a consequence, may act in nuclear subcellular localization and nuclear morphology. The protein is E3 ubiquitin-protein ligase ARIH1 (ARIH1) of Bos taurus (Bovine).